Reading from the N-terminus, the 156-residue chain is uncharacterized protein (156 aa).

A signal peptide spans 1-18; that stretch reads MKKLLSIFLMAFSLNAFA. One can recognise a Thioredoxin domain in the interval 19-156; that stretch reads QTNLADVQLK…AEQIRVFAEK (138 aa). Residues cysteine 54 and cysteine 57 are joined by a disulfide bond.

This sequence belongs to the thioredoxin family.

This is an uncharacterized protein from Haemophilus influenzae (strain ATCC 51907 / DSM 11121 / KW20 / Rd).